The sequence spans 208 residues: MCSHGHSHNCAAEHIPEVPGDDVYRYDMVSYIDMEKVTTLNESVDGAGKKVFKVMEKRDDRLEYVESDCDHELLFNIPFTGHVRLTGLSIIGDEDGSHPAKIRLFKDREAMSFDDCSIEADQEIDLKQDPQGLVDYPLKASKFGNIHNLSILVDANFGEDETKIYYIGLRGEFQHEFRQRIAIATYESRAQLKDHKNEIPDAVAKGLF.

The PITH domain maps to E17–R189.

The protein belongs to the PITHD1 family.

The chain is PITH domain-containing protein ZK353.9 from Caenorhabditis elegans.